The chain runs to 162 residues: MARVEL domain-containing protein 1 (162 aa).

Residues 1-17 lie on the Cytoplasmic side of the membrane; that stretch reads MPTQPQEKRSFLQFLKS. The 142-residue stretch at 14-155 folds into the MARVEL domain; the sequence is FLKSFVGIVR…SGIYCSCRKC (142 aa). Residues 18–38 traverse the membrane as a helical segment; sequence FVGIVRVLQILLGAGLWVTIA. Over 39–47 the chain is Extracellular; the sequence is ANKYEGSIH. The chain crosses the membrane as a helical span at residues 48 to 68; it reads FVLFVAVLFWLLTLAIFILTL. Residues 69-86 are Cytoplasmic-facing; that stretch reads LDKQDLVPIVGGERWLLS. The helical transmembrane segment at 87-107 threads the bilayer; it reads NLIHDVVATLLYLSTIGIMIY. The Extracellular portion of the chain corresponds to 108–127; that stretch reads KTQKNSYCNLDVYKHHCLYK. Residues 128–148 traverse the membrane as a helical segment; the sequence is VYLTASVFACLTAAVYLLSGI. Over 149-162 the chain is Cytoplasmic; it reads YCSCRKCRGERTVV.

Its subcellular location is the membrane. The protein resides in the nucleus. This Danio rerio (Zebrafish) protein is MARVEL domain-containing protein 1 (marveld1).